A 113-amino-acid polypeptide reads, in one-letter code: Meiotically up-regulated gene 98 protein, mitochondrial (113 aa).

The protein resides in the mitochondrion. Functionally, has a role in meiosis. This chain is Meiotically up-regulated gene 98 protein, mitochondrial (mug98), found in Schizosaccharomyces pombe (strain 972 / ATCC 24843) (Fission yeast).